Reading from the N-terminus, the 465-residue chain is MENQEFLSSSAPSEVTDGQVSTEISTCSEVFQKPIVLRILDTHRELEESEDPEKHENPEEPEEVREQDQRDESEECDEPHESYEPHAPYAPHKPRDSYAPYELHGPHAAPKLLKAREPRQLRHTREPRKSREAKETELLPSAAVMISPSLITRAPPRPQLSFLGANPVSCDFVRKCFSSRKRTPNLSKPKKQWGTPDRKLFWGNQDPIRPVSQGALKAQLTKRLENLAQPKEVSCHYVPNRAQYYHSCGRESVIWEITPPALFRQPSKRIQRLSQPNGFKRQCLLNRPFSDNSARDSLRISDPSPRILQLSVAKGTDPNYHPSKKMQTKISLSTLSAIATPRIIELAHPRIKLEGLCYERQRSELPIRPVPPAAMIAKPSPRTIALAKSKSVHQDYLPDRDAHWPVSYATTHSKASPRIQELANPNKRAPVRIVYYDPDVFKTKPAALKAQCSQRIWELSQPLTR.

Residues 1 to 29 (MENQEFLSSSAPSEVTDGQVSTEISTCSE) are compositionally biased toward polar residues. A disordered region spans residues 1–140 (MENQEFLSSS…REAKETELLP (140 aa)). Basic and acidic residues-rich tracts occupy residues 40–70 (LDTH…QDQR) and 114–137 (KARE…KETE). 8 THEG repeats span residues 174 to 192 (RKCF…PKKQ), 214 to 233 (GALK…PKEV), 260 to 279 (PALF…PNGF), 297 to 316 (SLRI…AKGT), 333 to 352 (STLS…PRIK), 373 to 392 (AAMI…SKSV), 409 to 428 (ATTH…PNKR), and 446 to 465 (AALK…PLTR).

The chain is Sperm microtubule associated protein 2-like from Homo sapiens (Human).